Consider the following 106-residue polypeptide: Small ribosomal subunit protein bS16 (106 aa).

The protein belongs to the bacterial ribosomal protein bS16 family.

The protein is Small ribosomal subunit protein bS16 of Wolbachia sp. subsp. Brugia malayi (strain TRS).